The chain runs to 588 residues: Histone-arginine methyltransferase CARM1 (588 aa).

The SAM-dependent MTase PRMT-type domain maps to 120-427; it reads AVQYFQFYGY…KRQSYDISIV (308 aa). The S-adenosyl-L-methionine site is built by Gln-133, Arg-142, Gly-166, Glu-188, Glu-217, and Ser-245. The transactivation domain stretch occupies residues 473 to 588; sequence TGGTYSMSQG…IPSNTMHYGS (116 aa).

The protein belongs to the class I-like SAM-binding methyltransferase superfamily. Protein arginine N-methyltransferase family. As to quaternary structure, homodimer.

It localises to the nucleus. The protein localises to the cytoplasm. The protein resides in the chromosome. It catalyses the reaction L-arginyl-[protein] + 2 S-adenosyl-L-methionine = N(omega),N(omega)-dimethyl-L-arginyl-[protein] + 2 S-adenosyl-L-homocysteine + 2 H(+). In terms of biological role, methylates (mono- and asymmetric dimethylation) the guanidino nitrogens of arginyl residues in several proteins involved in DNA packaging, transcription regulation, pre-mRNA splicing, and mRNA stability. Recruited to promoters upon gene activation together with histone acetyltransferases from EP300/P300 and p160 families, methylates histone H3 at 'Arg-17' (H3R17me) and activates transcription via chromatin remodeling. The chain is Histone-arginine methyltransferase CARM1 (carm1) from Danio rerio (Zebrafish).